The primary structure comprises 268 residues: Tryptophan synthase alpha chain (268 aa).

Catalysis depends on proton acceptor residues E49 and D60.

The protein belongs to the TrpA family. As to quaternary structure, tetramer of two alpha and two beta chains.

The catalysed reaction is (1S,2R)-1-C-(indol-3-yl)glycerol 3-phosphate + L-serine = D-glyceraldehyde 3-phosphate + L-tryptophan + H2O. Its pathway is amino-acid biosynthesis; L-tryptophan biosynthesis; L-tryptophan from chorismate: step 5/5. The alpha subunit is responsible for the aldol cleavage of indoleglycerol phosphate to indole and glyceraldehyde 3-phosphate. The polypeptide is Tryptophan synthase alpha chain (Xanthomonas oryzae pv. oryzae (strain MAFF 311018)).